A 134-amino-acid polypeptide reads, in one-letter code: ATP synthase epsilon chain, chloroplastic (134 aa).

It belongs to the ATPase epsilon chain family. F-type ATPases have 2 components, CF(1) - the catalytic core - and CF(0) - the membrane proton channel. CF(1) has five subunits: alpha(3), beta(3), gamma(1), delta(1), epsilon(1). CF(0) has three main subunits: a, b and c.

It localises to the plastid. The protein resides in the chloroplast thylakoid membrane. In terms of biological role, produces ATP from ADP in the presence of a proton gradient across the membrane. The protein is ATP synthase epsilon chain, chloroplastic of Pyropia yezoensis (Susabi-nori).